A 405-amino-acid polypeptide reads, in one-letter code: uncharacterized protein (405 aa).

It belongs to the UDP-glycosyltransferase family.

This is an uncharacterized protein from Bacillus subtilis (strain 168).